We begin with the raw amino-acid sequence, 576 residues long: Sulfite reductase [NADPH] hemoprotein beta-component (576 aa).

Residues C434, C440, C479, and C483 each coordinate [4Fe-4S] cluster. A siroheme-binding site is contributed by C483.

Belongs to the nitrite and sulfite reductase 4Fe-4S domain family. Alpha(8)-beta(8). The alpha component is a flavoprotein, the beta component is a hemoprotein. It depends on siroheme as a cofactor. Requires [4Fe-4S] cluster as cofactor.

It catalyses the reaction hydrogen sulfide + 3 NADP(+) + 3 H2O = sulfite + 3 NADPH + 4 H(+). It functions in the pathway sulfur metabolism; hydrogen sulfide biosynthesis; hydrogen sulfide from sulfite (NADPH route): step 1/1. Its function is as follows. Component of the sulfite reductase complex that catalyzes the 6-electron reduction of sulfite to sulfide. This is one of several activities required for the biosynthesis of L-cysteine from sulfate. The polypeptide is Sulfite reductase [NADPH] hemoprotein beta-component (Oceanobacillus iheyensis (strain DSM 14371 / CIP 107618 / JCM 11309 / KCTC 3954 / HTE831)).